The chain runs to 247 residues: D-alanyl-D-alanine dipeptidase (247 aa).

Positions 140 and 147 each coordinate Zn(2+). Glu-215 functions as the Proton donor/acceptor in the catalytic mechanism. His-218 is a Zn(2+) binding site.

This sequence belongs to the peptidase M15D family. The cofactor is Zn(2+).

It localises to the cytoplasm. It carries out the reaction D-alanyl-D-alanine + H2O = 2 D-alanine. Catalyzes hydrolysis of the D-alanyl-D-alanine dipeptide. May have a role in cell-wall turnover. This is D-alanyl-D-alanine dipeptidase from Synechocystis sp. (strain ATCC 27184 / PCC 6803 / Kazusa).